We begin with the raw amino-acid sequence, 855 residues long: Photoactivated adenylate cyclase subunit beta-like protein 1224-5/9F (855 aa).

Residues 56–149 form the BLUF 1 domain; that stretch reads LRRLMYLSKG…GRMSGVWHMK (94 aa). The disordered stretch occupies residues 420–444; it reads RPPIFDDTPKCNPRPRTPGCEGRQR. A BLUF 2 domain is found at 471-563; sequence VPTLTYISHA…RVYPSEWTLT (93 aa). The span at 813–827 shows a compositional bias: basic and acidic residues; the sequence is RSGEKPLTEPEEAKL. A disordered region spans residues 813–855; sequence RSGEKPLTEPEEAKLDFSPGRVRHGDSGRRSNSAQGKLSIQVR. Over residues 842–855 the composition is skewed to polar residues; that stretch reads RSNSAQGKLSIQVR.

As to quaternary structure, heterotetramer of two alpha and two beta subunits.

Its subcellular location is the cell projection. It is found in the cilium. The protein resides in the flagellum. The polypeptide is Photoactivated adenylate cyclase subunit beta-like protein 1224-5/9F (Euglena gracilis).